Here is a 245-residue protein sequence, read N- to C-terminus: Phycocyanobilin:ferredoxin oxidoreductase (245 aa).

It belongs to the HY2 family.

It catalyses the reaction (2R,3Z)-phycocyanobilin + 4 oxidized [2Fe-2S]-[ferredoxin] = biliverdin IXalpha + 4 reduced [2Fe-2S]-[ferredoxin] + 4 H(+). Catalyzes the four-electron reduction of biliverdin IX-alpha (2-electron reduction at both the A and D rings); the reaction proceeds via an isolatable 2-electron intermediate, 181,182-dihydrobiliverdin. This is Phycocyanobilin:ferredoxin oxidoreductase from Gloeothece citriformis (strain PCC 7424) (Cyanothece sp. (strain PCC 7424)).